A 436-amino-acid polypeptide reads, in one-letter code: Probable glucose-6-phosphate isomerase (436 aa).

Glutamate 272 (proton donor) is an active-site residue. Residues histidine 293 and lysine 404 contribute to the active site.

It belongs to the GPI family.

The protein localises to the cytoplasm. The enzyme catalyses alpha-D-glucose 6-phosphate = beta-D-fructose 6-phosphate. It participates in carbohydrate biosynthesis; gluconeogenesis. It functions in the pathway carbohydrate degradation; glycolysis; D-glyceraldehyde 3-phosphate and glycerone phosphate from D-glucose: step 2/4. Functionally, catalyzes the reversible isomerization of glucose-6-phosphate to fructose-6-phosphate. This Haloarcula marismortui (strain ATCC 43049 / DSM 3752 / JCM 8966 / VKM B-1809) (Halobacterium marismortui) protein is Probable glucose-6-phosphate isomerase.